The chain runs to 270 residues: Nuclear receptor-interacting protein 2 (270 aa).

Over residues 1 to 27 the composition is skewed to basic and acidic residues; the sequence is MSTGQEARRDEGDSRKEQEASLRDRAH. The disordered stretch occupies residues 1–33; it reads MSTGQEARRDEGDSRKEQEASLRDRAHLSQQRQ. Residues 61–99 form an interaction with NR1F2 region; it reads KDLQPHSVIQRRLVEGNQRRLQGESPLLQALIRGHDSSR. An LXXLL motif motif is present at residues 192–196; the sequence is LQTLL.

In terms of assembly, interacts with NR1F2, RARA and THRB in a ligand-dependent manner. Expression is restricted to the central nervous system (neurons in the dentate gyrus of the hippocampus, the amygdala, thalamic and hypothalamic regions).

Its subcellular location is the nucleus. Down-regulates transcriptional activation by nuclear receptors, such as NR1F2. This chain is Nuclear receptor-interacting protein 2 (Nrip2), found in Mus musculus (Mouse).